A 219-amino-acid polypeptide reads, in one-letter code: MRTRVKICGLTREADIAQAIEAGVDAIGLICYAGSKRYVDLARAARLRREVPAFVSVVTLFVNPAPDEVRAVLDHVGPDLLQFHGDESPEDCTRYGHRFMRAFRVGAAGLDSAGAIAAACRPYHEAAGWLFDSYSSGYGGSGLTFDHSLLAEVQADAGSRPLVLAGGLNPDNIAQALALVQPWAVDVSSGVESGPGLKSADKMKEFLKRIKKVDDDLHA.

This sequence belongs to the TrpF family.

The catalysed reaction is N-(5-phospho-beta-D-ribosyl)anthranilate = 1-(2-carboxyphenylamino)-1-deoxy-D-ribulose 5-phosphate. Its pathway is amino-acid biosynthesis; L-tryptophan biosynthesis; L-tryptophan from chorismate: step 3/5. The chain is N-(5'-phosphoribosyl)anthranilate isomerase from Bordetella avium (strain 197N).